A 664-amino-acid polypeptide reads, in one-letter code: Probable 3',5'-cyclic phosphodiesterase pde-1 (664 aa).

Disordered regions lie at residues 24-60 (TSSA…SIKI) and 113-142 (RNQK…KSYD). Composition is skewed to basic and acidic residues over residues 28-38 (SEEHGDSDKKL) and 114-130 (NQKE…EKEP). Residues 256–634 (VQCPIPPEIA…AHWKERAAKE (379 aa)) enclose the PDEase domain. Residue histidine 333 is the Proton donor of the active site. Residues histidine 337, histidine 373, aspartate 374, and aspartate 480 each contribute to the a divalent metal cation site. Disordered stretches follow at residues 564-597 (DSLF…TSPS) and 630-664 (RAAK…VTTN). Residues 630-644 (RAAKEEEERKIKEAA) show a composition bias toward basic and acidic residues.

Belongs to the cyclic nucleotide phosphodiesterase family. In terms of assembly, interacts with cmd-1 in the presence of Ca(2+). A divalent metal cation serves as cofactor. As to expression, expressed in AFD thermosensory neurons.

It catalyses the reaction a nucleoside 3',5'-cyclic phosphate + H2O = a nucleoside 5'-phosphate + H(+). Redundantly with pde-5, plays a role in the AFD thermosensory neurons to regulate microvilli receptive ending morphology, possibly by regulating cGMP levels. The chain is Probable 3',5'-cyclic phosphodiesterase pde-1 (pde-1) from Caenorhabditis elegans.